Reading from the N-terminus, the 104-residue chain is MVIRFDQIGSLVLSMKSLASLSFQRCLRENSSLVAALDRLDAAVDELSALSFDALTTPERDRARRDRDHHPWSRSRSQLSPRMAHGAVHQCQWPKAVWAVIDNP.

Over residues 58-71 the composition is skewed to basic and acidic residues; the sequence is PERDRARRDRDHHP. Positions 58 to 84 are disordered; the sequence is PERDRARRDRDHHPWSRSRSQLSPRMA.

This is an uncharacterized protein from Mycobacterium tuberculosis (strain ATCC 25618 / H37Rv).